The chain runs to 213 residues: 3-isopropylmalate dehydratase small subunit (213 aa).

Belongs to the LeuD family. LeuD type 1 subfamily. In terms of assembly, heterodimer of LeuC and LeuD.

It catalyses the reaction (2R,3S)-3-isopropylmalate = (2S)-2-isopropylmalate. The protein operates within amino-acid biosynthesis; L-leucine biosynthesis; L-leucine from 3-methyl-2-oxobutanoate: step 2/4. Catalyzes the isomerization between 2-isopropylmalate and 3-isopropylmalate, via the formation of 2-isopropylmaleate. The polypeptide is 3-isopropylmalate dehydratase small subunit (Neisseria meningitidis serogroup C (strain 053442)).